The sequence spans 245 residues: 8-amino-3,8-dideoxy-manno-octulosonate cytidylyltransferase (245 aa).

The protein belongs to the KdsB family.

It is found in the cytoplasm. The catalysed reaction is 8-amino-3,8-dideoxy-alpha-D-manno-octulosonate + CTP = CMP-8-amino-3,8-dideoxy-alpha-D-manno-oct-2-ulosonate + diphosphate. The protein operates within bacterial outer membrane biogenesis; lipopolysaccharide biosynthesis. Functionally, activates KDO8N (a required 8-carbon sugar) for incorporation into bacterial lipopolysaccharide in the Shewanella genus. This is 8-amino-3,8-dideoxy-manno-octulosonate cytidylyltransferase from Shewanella baltica (strain OS185).